A 442-amino-acid polypeptide reads, in one-letter code: Glutamate--methylamine ligase (442 aa).

The GS beta-grasp domain occupies Asn-13–Lys-97. The region spanning Thr-103–Phe-442 is the GS catalytic domain.

It belongs to the glutamine synthetase family. Type 3 subfamily. Mg(2+) is required as a cofactor.

The enzyme catalyses methylamine + L-glutamate + ATP = N(5)-methyl-L-glutamine + ADP + phosphate + H(+). Catalyzes the formation of N(5)-methyl-L-glutamine from glutamate and methylamine. This chain is Glutamate--methylamine ligase, found in Methyloversatilis universalis (strain ATCC BAA-1314 / DSM 25237 / JCM 13912 / CCUG 52030 / FAM5).